Here is a 165-residue protein sequence, read N- to C-terminus: Probable DNA polymerase III subunit chi (165 aa).

This sequence belongs to the DNA polymerase III chi/HolC chain family. As to quaternary structure, DNA polymerase III contains a core (composed of alpha, epsilon and theta chains) that associates with a tau subunit. This core dimerizes to form the POLIII' complex. PolIII' associates with the gamma complex (composed of gamma, delta, delta', psi and chi chains) and with the beta chain to form the complete DNA polymerase III complex. Interacts directly with the psi subunit (holD). The only subunit of the DNA polymerase III holoenzyme known to interact with single-stranded DNA binding protein (SSB).

It catalyses the reaction DNA(n) + a 2'-deoxyribonucleoside 5'-triphosphate = DNA(n+1) + diphosphate. Part of the beta sliding clamp loading complex, which hydrolyzes ATP to load the beta clamp onto primed DNA to form the DNA replication pre-initiation complex. DNA polymerase III is a complex, multichain enzyme responsible for most of the replicative synthesis in bacteria. This DNA polymerase also exhibits 3' to 5' exonuclease activity. This is Probable DNA polymerase III subunit chi from Rickettsia prowazekii (strain Madrid E).